A 507-amino-acid polypeptide reads, in one-letter code: CWF19-like protein DRN1 (507 aa).

Position 242 is a phosphoserine (serine 242).

This sequence belongs to the CWF19 family. Interacts with DBR1. Interacts with SYF1, a component of the NTC complex. Interacts with lariat-introns and lariat-intermediates.

Its subcellular location is the nucleus. The protein resides in the cytoplasm. Functionally, involved in branched RNA metabolism, modulating the turnover of lariat-intron pre-mRNAs by the lariat-debranching enzyme DBR1. Enhances the debranching activity of DBR1 in vitro. This Saccharomyces cerevisiae (strain ATCC 204508 / S288c) (Baker's yeast) protein is CWF19-like protein DRN1 (DRN1).